The following is an 852-amino-acid chain: Kinesin-like protein KIF18B (852 aa).

The 345-residue stretch at 7–351 (TLQVVVRVRP…LKYADRAKEI (345 aa)) folds into the Kinesin motor domain. ATP is bound at residue 109 to 116 (GATGAGKT). Residues 366–393 (ISQYATICQQLQAEVAALRKKLQVYEGG) are a coiled coil. Disordered regions lie at residues 390–424 (YEGG…PAGP) and 437–485 (QVER…RLTL). The residue at position 404 (Ser-404) is a Phosphoserine. Phosphothreonine is present on Thr-417. Over residues 451–461 (QSPEDEDEGPA) the composition is skewed to acidic residues. Residues Ser-452, Ser-480, and Ser-558 each carry the phosphoserine modification. Disordered regions lie at residues 575-594 (IPVP…PVTR) and 602-689 (GPLH…SPRV). The span at 577–588 (VPSPLCPEPPGY) shows a compositional bias: pro residues. A Nuclear localization signal motif is present at residues 624–632 (PMEKKRRRP). 2 positions are modified to phosphoserine: Ser-633 and Ser-639. Positions 653 to 656 (SFLP) match the MAPRE1-binding motif. Position 662 is a phosphoserine (Ser-662). Residues 664–673 (PDTQPSQGPS) are compositionally biased toward polar residues. At Thr-674 the chain carries Phosphothreonine. The tract at residues 711-736 (TPLALPTRDLNATFDLSEEPPSKPSF) is KIF2C-binding. The disordered stretch occupies residues 767–798 (MKGPKPTSSLPGTSACKKKRVASSSVSHGRSR). 2 short sequence motifs (MAPRE1-binding) span residues 774–777 (SSLP) and 800–803 (ARLP). Ser-822 is modified (phosphoserine).

Belongs to the TRAFAC class myosin-kinesin ATPase superfamily. Kinesin family. Interacts with MAPRE1; this interaction is required for efficient accumulation at microtubule plus ends. Interacts with KIF2C at microtubule tips; this interaction increases the affinity of both partners for microtubule plus ends and is required for robust microtubule depolymerization. KIF2C phosphorylation by AURKA or AURKB strongly reduces KIF18B-binding. Shows a prominent expression in the amygdala.

The protein localises to the nucleus. It is found in the cytoplasm. Its subcellular location is the cytoskeleton. Functionally, in complex with KIF2C, constitutes the major microtubule plus-end depolymerizing activity in mitotic cells. Its major role may be to transport KIF2C and/or MAPRE1 along microtubules. This Homo sapiens (Human) protein is Kinesin-like protein KIF18B (KIF18B).